A 706-amino-acid chain; its full sequence is Elongation factor G (706 aa).

One can recognise a tr-type G domain in the interval 8-297 (SYVRNIGIGA…AVVDYLPSPN (290 aa)). Residues 17–24 (AHIDAGKT), 95–99 (DTPGH), and 149–152 (NKMD) each bind GTP.

It belongs to the TRAFAC class translation factor GTPase superfamily. Classic translation factor GTPase family. EF-G/EF-2 subfamily.

It is found in the cytoplasm. Catalyzes the GTP-dependent ribosomal translocation step during translation elongation. During this step, the ribosome changes from the pre-translocational (PRE) to the post-translocational (POST) state as the newly formed A-site-bound peptidyl-tRNA and P-site-bound deacylated tRNA move to the P and E sites, respectively. Catalyzes the coordinated movement of the two tRNA molecules, the mRNA and conformational changes in the ribosome. The polypeptide is Elongation factor G (Orientia tsutsugamushi (strain Boryong) (Rickettsia tsutsugamushi)).